Reading from the N-terminus, the 131-residue chain is Arsenate reductase 2 (131 aa).

Active-site nucleophile residues include Cys-10, Cys-82, and Cys-89. Disulfide bonds link Cys-10-Cys-82 and Cys-82-Cys-89.

It belongs to the low molecular weight phosphotyrosine protein phosphatase family. Thioredoxin-coupled ArsC subfamily.

It is found in the cytoplasm. It catalyses the reaction arsenate + [thioredoxin]-dithiol + H(+) = arsenite + [thioredoxin]-disulfide + H2O. Functionally, catalyzes the reduction of arsenate [As(V)] to arsenite [As(III)]. In Staphylococcus haemolyticus (strain JCSC1435), this protein is Arsenate reductase 2.